The chain runs to 246 residues: 3-deoxy-manno-octulosonate cytidylyltransferase (246 aa).

This sequence belongs to the KdsB family.

It is found in the cytoplasm. It catalyses the reaction 3-deoxy-alpha-D-manno-oct-2-ulosonate + CTP = CMP-3-deoxy-beta-D-manno-octulosonate + diphosphate. It functions in the pathway nucleotide-sugar biosynthesis; CMP-3-deoxy-D-manno-octulosonate biosynthesis; CMP-3-deoxy-D-manno-octulosonate from 3-deoxy-D-manno-octulosonate and CTP: step 1/1. Its pathway is bacterial outer membrane biogenesis; lipopolysaccharide biosynthesis. Functionally, activates KDO (a required 8-carbon sugar) for incorporation into bacterial lipopolysaccharide in Gram-negative bacteria. In Chloroherpeton thalassium (strain ATCC 35110 / GB-78), this protein is 3-deoxy-manno-octulosonate cytidylyltransferase.